Here is a 248-residue protein sequence, read N- to C-terminus: Flavodoxin/ferredoxin--NADP reductase (248 aa).

The region spanning 2–101 (ADWVTGKVTK…SEAAGFFVLD (100 aa)) is the FAD-binding FR-type domain. Asp-17 contacts NADP(+). FAD contacts are provided by residues 50–53 (RAYS), Tyr-66, 74–76 (KLS), and Thr-116. NADP(+) contacts are provided by residues 143 to 144 (AR), 173 to 174 (SR), Arg-184, 214 to 216 (NPQ), and Asp-220. FAD is bound at residue 247-248 (YW).

The protein belongs to the ferredoxin--NADP reductase type 1 family. In terms of assembly, monomer. The cofactor is FAD.

It is found in the cytoplasm. The enzyme catalyses 2 reduced [2Fe-2S]-[ferredoxin] + NADP(+) + H(+) = 2 oxidized [2Fe-2S]-[ferredoxin] + NADPH. The catalysed reaction is reduced [flavodoxin] + NADP(+) = oxidized [flavodoxin] + NADPH + 2 H(+). Transports electrons between flavodoxin or ferredoxin and NADPH. Reduces flavodoxin 1, flavodoxin 2 and ferredoxin, ferredoxin being the kinetically and thermodynamically preferred partner. Required for the activation of several enzymes such as pyruvate formate-lyase, anaerobic ribonucleotide reductase and cobalamin-dependent methionine synthase. In Escherichia coli (strain K12), this protein is Flavodoxin/ferredoxin--NADP reductase.